We begin with the raw amino-acid sequence, 365 residues long: Protein RecA (365 aa).

81-88 contributes to the ATP binding site; that stretch reads GPESSGKT.

Belongs to the RecA family.

Its subcellular location is the cytoplasm. Its function is as follows. Can catalyze the hydrolysis of ATP in the presence of single-stranded DNA, the ATP-dependent uptake of single-stranded DNA by duplex DNA, and the ATP-dependent hybridization of homologous single-stranded DNAs. It interacts with LexA causing its activation and leading to its autocatalytic cleavage. In Borreliella afzelii (strain PKo) (Borrelia afzelii), this protein is Protein RecA.